The following is a 463-amino-acid chain: Ribosomal protein uS12 methylthiotransferase RimO (463 aa).

In terms of domain architecture, MTTase N-terminal spans 11–126; it reads PKIGFVSLGC…VMEVVHTHCP (116 aa). Residues Cys20, Cys56, Cys85, Cys161, Cys165, and Cys168 each coordinate [4Fe-4S] cluster. The 242-residue stretch at 147–388 folds into the Radical SAM core domain; it reads LTPRHYAYLK…MAVAEEVSTA (242 aa). The TRAM domain maps to 391-463; sequence QRRVGQTMQV…QGHDLVGVPV (73 aa).

Belongs to the methylthiotransferase family. RimO subfamily. It depends on [4Fe-4S] cluster as a cofactor.

The protein resides in the cytoplasm. The enzyme catalyses L-aspartate(89)-[ribosomal protein uS12]-hydrogen + (sulfur carrier)-SH + AH2 + 2 S-adenosyl-L-methionine = 3-methylsulfanyl-L-aspartate(89)-[ribosomal protein uS12]-hydrogen + (sulfur carrier)-H + 5'-deoxyadenosine + L-methionine + A + S-adenosyl-L-homocysteine + 2 H(+). Functionally, catalyzes the methylthiolation of an aspartic acid residue of ribosomal protein uS12. This Acidovorax sp. (strain JS42) protein is Ribosomal protein uS12 methylthiotransferase RimO.